The sequence spans 144 residues: Large ribosomal subunit protein uL13 (144 aa).

The protein belongs to the universal ribosomal protein uL13 family. Part of the 50S ribosomal subunit.

Its function is as follows. This protein is one of the early assembly proteins of the 50S ribosomal subunit, although it is not seen to bind rRNA by itself. It is important during the early stages of 50S assembly. The protein is Large ribosomal subunit protein uL13 of Pelotomaculum thermopropionicum (strain DSM 13744 / JCM 10971 / SI).